The following is a 195-amino-acid chain: Small ribosomal subunit protein uS4B (195 aa).

One can recognise an S4 RNA-binding domain in the interval 107–181 (RRLQTQVYKL…VARRNAARKA (75 aa)). Residues 161-195 (TSPFGGARPGRVARRNAARKAEASGEAAEEAEDEE) form a disordered region. A Glycyl lysine isopeptide (Lys-Gly) (interchain with G-Cter in ubiquitin) cross-link involves residue Lys-180. Ser-184 is subject to Phosphoserine.

It belongs to the universal ribosomal protein uS4 family. In terms of assembly, component of the small ribosomal subunit (SSU). Mature yeast ribosomes consist of a small (40S) and a large (60S) subunit. The 40S small subunit contains 1 molecule of ribosomal RNA (18S rRNA) and 33 different proteins (encoded by 57 genes). The large 60S subunit contains 3 rRNA molecules (25S, 5.8S and 5S rRNA) and 46 different proteins (encoded by 81 genes). Interacts with snoRNA U3. uS11 interacts with MPP10. Component of the ribosomal small subunit (SSU) processome composed of at least 40 protein subunits and snoRNA U3.

The protein localises to the cytoplasm. Its subcellular location is the nucleus. It localises to the nucleolus. Functionally, component of the ribosome, a large ribonucleoprotein complex responsible for the synthesis of proteins in the cell. The small ribosomal subunit (SSU) binds messenger RNAs (mRNAs) and translates the encoded message by selecting cognate aminoacyl-transfer RNA (tRNA) molecules. The large subunit (LSU) contains the ribosomal catalytic site termed the peptidyl transferase center (PTC), which catalyzes the formation of peptide bonds, thereby polymerizing the amino acids delivered by tRNAs into a polypeptide chain. The nascent polypeptides leave the ribosome through a tunnel in the LSU and interact with protein factors that function in enzymatic processing, targeting, and the membrane insertion of nascent chains at the exit of the ribosomal tunnel. uS4 is involved in nucleolar processing of pre-18S ribosomal RNA and ribosome assembly. This Saccharomyces cerevisiae (strain ATCC 204508 / S288c) (Baker's yeast) protein is Small ribosomal subunit protein uS4B.